A 365-amino-acid chain; its full sequence is S-adenosylmethionine:tRNA ribosyltransferase-isomerase (365 aa).

Belongs to the QueA family. Monomer.

It localises to the cytoplasm. It catalyses the reaction 7-aminomethyl-7-carbaguanosine(34) in tRNA + S-adenosyl-L-methionine = epoxyqueuosine(34) in tRNA + adenine + L-methionine + 2 H(+). It participates in tRNA modification; tRNA-queuosine biosynthesis. In terms of biological role, transfers and isomerizes the ribose moiety from AdoMet to the 7-aminomethyl group of 7-deazaguanine (preQ1-tRNA) to give epoxyqueuosine (oQ-tRNA). This Rickettsia conorii (strain ATCC VR-613 / Malish 7) protein is S-adenosylmethionine:tRNA ribosyltransferase-isomerase.